A 228-amino-acid chain; its full sequence is Growth arrest-specific protein 1 homolog (228 aa).

The N-terminal stretch at 1-17 (MRRVILPLVMTVTLCLA) is a signal peptide. N-linked (GlcNAc...) asparagine glycosylation is found at N143 and N156. D205 carries GPI-anchor amidated aspartate lipidation. A propeptide spans 206 to 228 (SSVGHGFNILSAISVYLLTVLVF) (removed in mature form).

Pharynx muscle cells from its early formation, in the two-fold embryo, until the adult stage.

The protein resides in the cell membrane. Its function is as follows. Role in pharynx function or development. This Caenorhabditis elegans protein is Growth arrest-specific protein 1 homolog (phg-1).